We begin with the raw amino-acid sequence, 153 residues long: Large ribosomal subunit protein uL13 (153 aa).

The protein belongs to the universal ribosomal protein uL13 family. In terms of assembly, part of the 50S ribosomal subunit.

Its function is as follows. This protein is one of the early assembly proteins of the 50S ribosomal subunit, although it is not seen to bind rRNA by itself. It is important during the early stages of 50S assembly. In Chelativorans sp. (strain BNC1), this protein is Large ribosomal subunit protein uL13.